We begin with the raw amino-acid sequence, 317 residues long: ADP-L-glycero-D-manno-heptose-6-epimerase (317 aa).

NADP(+)-binding positions include 10-11 (FI), 31-32 (DD), Lys38, Lys53, 75-79 (QGACS), and Asn92. The active-site Proton acceptor is the Tyr139. Lys143 contacts NADP(+). Asn166 is a binding site for substrate. Val167 and Lys175 together coordinate NADP(+). Lys175 serves as the catalytic Proton acceptor. Substrate contacts are provided by residues Gly177, His184, 198-201 (FEGV), Arg211, and Tyr275.

The protein belongs to the NAD(P)-dependent epimerase/dehydratase family. HldD subfamily. As to quaternary structure, homopentamer. NADP(+) is required as a cofactor.

It catalyses the reaction ADP-D-glycero-beta-D-manno-heptose = ADP-L-glycero-beta-D-manno-heptose. The protein operates within nucleotide-sugar biosynthesis; ADP-L-glycero-beta-D-manno-heptose biosynthesis; ADP-L-glycero-beta-D-manno-heptose from D-glycero-beta-D-manno-heptose 7-phosphate: step 4/4. Catalyzes the interconversion between ADP-D-glycero-beta-D-manno-heptose and ADP-L-glycero-beta-D-manno-heptose via an epimerization at carbon 6 of the heptose. The protein is ADP-L-glycero-D-manno-heptose-6-epimerase of Shewanella piezotolerans (strain WP3 / JCM 13877).